We begin with the raw amino-acid sequence, 994 residues long: Protein translocase subunit SecA (994 aa).

ATP-binding positions include glutamine 85, 103–107, and aspartate 492; that span reads GEGKT. The segment covering 868–888 has biased composition (low complexity); it reads IPDGAGPVADAQPVRPAAARQ. Positions 868–994 are disordered; that stretch reads IPDGAGPVAD…HGDPARRNTE (127 aa). Residues 889-900 are compositionally biased toward pro residues; that stretch reads TPPPPSPVPSAP. 4 residues coordinate Zn(2+): cysteine 973, cysteine 975, cysteine 984, and histidine 985. Over residues 984-994 the composition is skewed to basic and acidic residues; that stretch reads CHGDPARRNTE.

This sequence belongs to the SecA family. In terms of assembly, monomer and homodimer. Part of the essential Sec protein translocation apparatus which comprises SecA, SecYEG and auxiliary proteins SecDF. Other proteins may also be involved. Zn(2+) is required as a cofactor.

It localises to the cell membrane. It is found in the cytoplasm. The enzyme catalyses ATP + H2O + cellular proteinSide 1 = ADP + phosphate + cellular proteinSide 2.. Its function is as follows. Part of the Sec protein translocase complex. Interacts with the SecYEG preprotein conducting channel. Has a central role in coupling the hydrolysis of ATP to the transfer of proteins into and across the cell membrane, serving as an ATP-driven molecular motor driving the stepwise translocation of polypeptide chains across the membrane. The chain is Protein translocase subunit SecA from Frankia casuarinae (strain DSM 45818 / CECT 9043 / HFP020203 / CcI3).